Reading from the N-terminus, the 502-residue chain is Glutamate--tRNA ligase (502 aa).

Residues 9 to 19 (PSPTGFPHVGT) carry the 'HIGH' region motif. Positions 250 to 254 (KLSKR) match the 'KMSKS' region motif. ATP is bound at residue Lys-253.

Belongs to the class-I aminoacyl-tRNA synthetase family. Glutamate--tRNA ligase type 1 subfamily. As to quaternary structure, monomer.

Its subcellular location is the cytoplasm. It carries out the reaction tRNA(Glu) + L-glutamate + ATP = L-glutamyl-tRNA(Glu) + AMP + diphosphate. Catalyzes the attachment of glutamate to tRNA(Glu) in a two-step reaction: glutamate is first activated by ATP to form Glu-AMP and then transferred to the acceptor end of tRNA(Glu). This chain is Glutamate--tRNA ligase, found in Acinetobacter baumannii (strain SDF).